The chain runs to 143 residues: Large ribosomal subunit protein uL15 (143 aa).

The disordered stretch occupies residues 1 to 59; that stretch reads MELNGIKPSLGAKHAKRRVGRGIGSGLGKTAGRGHKGQKSRAGGYHKVGFEGGQMPMQR. A compositionally biased stretch (gly residues) spans 21 to 31; the sequence is RGIGSGLGKTA.

The protein belongs to the universal ribosomal protein uL15 family. Part of the 50S ribosomal subunit.

Functionally, binds to the 23S rRNA. The protein is Large ribosomal subunit protein uL15 of Polaromonas sp. (strain JS666 / ATCC BAA-500).